The chain runs to 479 residues: Ribosomal RNA small subunit methyltransferase F (479 aa).

S-adenosyl-L-methionine contacts are provided by residues 125–131 (AAAPGSK), E149, D176, and D194. The active-site Nucleophile is C247.

The protein belongs to the class I-like SAM-binding methyltransferase superfamily. RsmB/NOP family.

It localises to the cytoplasm. The catalysed reaction is cytidine(1407) in 16S rRNA + S-adenosyl-L-methionine = 5-methylcytidine(1407) in 16S rRNA + S-adenosyl-L-homocysteine + H(+). Functionally, specifically methylates the cytosine at position 1407 (m5C1407) of 16S rRNA. This chain is Ribosomal RNA small subunit methyltransferase F, found in Salmonella paratyphi A (strain ATCC 9150 / SARB42).